The primary structure comprises 2269 residues: Anaphase-promoting complex subunit 1 (2269 aa).

Disordered stretches follow at residues 305 to 334, 379 to 433, 609 to 644, 804 to 845, and 1136 to 1197; these read PSSN…QTIN, SSPP…QENS, NNNN…RKPL, KVYP…NNNN, and STAS…NSTS. Low complexity-rich tracts occupy residues 306–334, 379–430, 609–638, 809–845, and 1136–1159; these read SSNA…QTIN, SSPP…QQQQ, NNNN…NNNN, and STAS…GQSN. Residues 1160-1177 are compositionally biased toward polar residues; it reads GLPMNSTTNQMNSHQINN. PC repeat units lie at residues 1440–1472 and 1483–1520; these read AALM…PIND and TAGM…ISKE. The segment at 1535–1586 is disordered; that stretch reads STPSISSNRNNNDLFNNGSNNNSSSNGGGGGGGGNNNGNNSNNGNNGSSQFK. Over residues 1540–1559 the composition is skewed to low complexity; that stretch reads SSNRNNNDLFNNGSNNNSSS. A compositionally biased stretch (gly residues) spans 1560-1570; that stretch reads NGGGGGGGGNN. Residues 1571–1583 show a composition bias toward low complexity; sequence NGNNSNNGNNGSS. PC repeat units lie at residues 1605 to 1637, 1722 to 1756, and 1792 to 1807; these read GAII…GLNY, GAAF…RQVY, and LVMA…KILR. Positions 1960–1993 are enriched in low complexity; it reads NNNNNNNNNNNNNNNNNNNNNNNNNNNNNNNNNN. The interval 1960–1997 is disordered; sequence NNNNNNNNNNNNNNNNNNNNNNNNNNNNNNNNNNKNIL.

The protein belongs to the APC1 family. As to quaternary structure, the APC/C is composed of at least 13 subunits that stay tightly associated throughout the cell cycle: anapc1, anapc2, anapc3, anapc4, anapc5, anapc6, anapc7, anapc8, anapc10, anapc11, cdc20, cdc26 and cdh1.

The protein localises to the nucleus. Its pathway is protein modification; protein ubiquitination. Functionally, component of the anaphase promoting complex/cyclosome (APC/C), a cell cycle-regulated E3 ubiquitin-protein ligase complex that controls progression through mitosis and the G1 phase of the cell cycle. The sequence is that of Anaphase-promoting complex subunit 1 (anapc1) from Dictyostelium discoideum (Social amoeba).